The sequence spans 1110 residues: ATP-dependent DNA helicase MPH1 (1110 aa).

Over residues 24–34 (LNEVSDSQTGR) the composition is skewed to polar residues. Disordered stretches follow at residues 24–165 (LNEV…TNGK), 178–212 (FEEE…PVTN), and 236–305 (TETA…PTHH). Composition is skewed to basic and acidic residues over residues 42 to 57 (NSHE…REIE) and 178 to 188 (FEEEQSARGDA). Positions 189 to 199 (EMLDDSIEEPG) are enriched in acidic residues. 2 stretches are compositionally biased toward polar residues: residues 246 to 273 (ISSQ…QTTL) and 287 to 300 (QPAT…SRNE). The region spanning 331–499 (IAHRALFHNL…EVIDGLSISR (169 aa)) is the Helicase ATP-binding domain. 344–351 (LPTGLGKT) is a binding site for ATP. A DEAH box motif is present at residues 447–450 (DEAH). One can recognise a Helicase C-terminal domain in the interval 675–846 (ILNHFLDAGG…RFTFHTDKSS (172 aa)). 3 disordered regions span residues 867–937 (ENSQ…PDLG), 1013–1055 (VGDP…RCGT), and 1069–1110 (NLAW…DVFE). Residues 879–890 (RSRAPKRPPKKF) show a composition bias toward basic residues. Basic and acidic residues-rich tracts occupy residues 891 to 900 (HMPDGVEKGF), 1041 to 1055 (QSRE…RCGT), and 1077 to 1093 (EAPR…DQKP).

Belongs to the DEAD box helicase family. DEAH subfamily. FANCM sub-subfamily. In terms of assembly, interacts with the MHF histone-fold complex to form the FANCM-MHF complex.

It is found in the nucleus. It carries out the reaction ATP + H2O = ADP + phosphate + H(+). Its function is as follows. ATP-dependent DNA helicase involved in DNA damage repair by homologous recombination and in genome maintenance. Capable of unwinding D-loops. Plays a role in limiting crossover recombinants during mitotic DNA double-strand break (DSB) repair. Component of a FANCM-MHF complex which promotes gene conversion at blocked replication forks, probably by reversal of the stalled fork. This Coccidioides immitis (strain RS) (Valley fever fungus) protein is ATP-dependent DNA helicase MPH1.